Consider the following 106-residue polypeptide: Large ribosomal subunit protein P1B (106 aa).

An N-acetylserine modification is found at serine 2. Low complexity predominate over residues 69–82 (AGAASGAAAAGGDA). The disordered stretch occupies residues 69–106 (AGAASGAAAAGGDAAAEEEKEEEAAEESDDDMGFGLFD). The span at 83 to 100 (AAEEEKEEEAAEESDDDM) shows a compositional bias: acidic residues. Serine 96 carries the post-translational modification Phosphoserine.

The protein belongs to the eukaryotic ribosomal protein P1/P2 family. Component of the large ribosomal subunit (LSU). Mature yeast ribosomes consist of a small (40S) and a large (60S) subunit. The 40S small subunit contains 1 molecule of ribosomal RNA (18S rRNA) and 33 different proteins (encoded by 57 genes). The large 60S subunit contains 3 rRNA molecules (25S, 5.8S and 5S rRNA) and 46 different proteins (encoded by 81 genes). The 5 acidic ribosomal P-proteins form the stalk structure of the 60S subunit. They are organized as a pentameric complex in which uL10/P0 interacts with 2 heterodimers, P1A-P2B and P1B-P2A.

The protein localises to the cytoplasm. In terms of biological role, component of the ribosome, a large ribonucleoprotein complex responsible for the synthesis of proteins in the cell. The small ribosomal subunit (SSU) binds messenger RNAs (mRNAs) and translates the encoded message by selecting cognate aminoacyl-transfer RNA (tRNA) molecules. The large subunit (LSU) contains the ribosomal catalytic site termed the peptidyl transferase center (PTC), which catalyzes the formation of peptide bonds, thereby polymerizing the amino acids delivered by tRNAs into a polypeptide chain. The nascent polypeptides leave the ribosome through a tunnel in the LSU and interact with protein factors that function in enzymatic processing, targeting, and the membrane insertion of nascent chains at the exit of the ribosomal tunnel. This chain is Large ribosomal subunit protein P1B, found in Saccharomyces cerevisiae (strain ATCC 204508 / S288c) (Baker's yeast).